A 76-amino-acid chain; its full sequence is Membrane protein UL43 homolog (76 aa).

The next 2 helical transmembrane spans lie at 7–27 (AVCV…SLAF) and 54–74 (ISRW…ATII).

The protein belongs to the alphaherpesvirinae HHV-1 UL43 family.

Its subcellular location is the membrane. This is Membrane protein UL43 homolog from Equus caballus (Horse).